The following is a 166-amino-acid chain: Transcription factor HES-5 (166 aa).

Positions 16 to 72 constitute a bHLH domain; that stretch reads KNRLRKPVVEKMRRDRINSSIEQLKLLLEQEFARHQPNSKLEKADILEMAVSYLKHS. Positions 88-119 constitute an Orange domain; sequence YSEGYSWCLQEAVQFLTLHAASDTQMKLLYHF. The disordered stretch occupies residues 125-166; the sequence is PAAPVKETPTPGAAPQPARSSTKAAASVSTSRQSACGLWRPW. Over residues 142-156 the composition is skewed to low complexity; sequence ARSSTKAAASVSTSR. The WRPW motif signature appears at 163–166; it reads WRPW.

Transcription repression requires formation of a complex with a corepressor protein of the Groucho/TLE family. As to expression, expressed predominantly in embryonic neural lineage cells.

It is found in the nucleus. Transcriptional repressor of genes that require a bHLH protein for their transcription. Plays an important role as neurogenesis negative regulator. The protein is Transcription factor HES-5 (Hes5) of Rattus norvegicus (Rat).